The chain runs to 143 residues: Small ribosomal subunit protein bS18 (143 aa).

The interval 1 to 72 (MARPDMGGPK…RGGEEGGRRG (72 aa)) is disordered. A compositionally biased stretch (gly residues) spans 10 to 50 (KSSGGFGGPRSGGGFGGGGYGGGGGGGGGYGGGGGGGFGGR). Residues 51 to 70 (GGDRGDRGDRDDRGGEEGGR) show a composition bias toward basic and acidic residues.

This sequence belongs to the bacterial ribosomal protein bS18 family. Part of the 30S ribosomal subunit. Forms a tight heterodimer with protein bS6.

Binds as a heterodimer with protein bS6 to the central domain of the 16S rRNA, where it helps stabilize the platform of the 30S subunit. The chain is Small ribosomal subunit protein bS18 from Anaeromyxobacter sp. (strain Fw109-5).